Consider the following 376-residue polypeptide: Transmembrane protein 43 homolog (376 aa).

Over 1–10 the chain is Cytoplasmic; the sequence is MASLSETLRS. Residues 11–31 traverse the membrane as a helical segment; that stretch reads HWPIALFGVILFVAGGTELYW. Residues 32-277 are Lumenal-facing; it reads NEGRAVHNMM…EVFRLEARAQ (246 aa). A helical membrane pass occupies residues 278–298; the sequence is VLHTWWWRFVGWLLIFFGVTC. Residues 299-323 lie on the Cytoplasmic side of the membrane; it reads NTKILRLLFVRVPLLVALAPDPQFP. Transmembrane regions (helical) follow at residues 324-344 and 345-365; these read VTGNLLIAFSLALTIAAVAWI and LHRPVIGACLLLAGASPYVWF. Residues 366–376 lie on the Cytoplasmic side of the membrane; sequence TRNLVDYHRLD.

It belongs to the TMEM43 family.

It is found in the endoplasmic reticulum membrane. Its subcellular location is the nucleus envelope. Functionally, involved in lipid metabolism and utilization. The chain is Transmembrane protein 43 homolog from Drosophila melanogaster (Fruit fly).